A 483-amino-acid chain; its full sequence is Glutamyl-tRNA(Gln) amidotransferase subunit A (483 aa).

Residues Lys-76 and Ser-151 each act as charge relay system in the active site. Ser-175 (acyl-ester intermediate) is an active-site residue.

Belongs to the amidase family. GatA subfamily. In terms of assembly, heterotrimer of A, B and C subunits.

The enzyme catalyses L-glutamyl-tRNA(Gln) + L-glutamine + ATP + H2O = L-glutaminyl-tRNA(Gln) + L-glutamate + ADP + phosphate + H(+). Functionally, allows the formation of correctly charged Gln-tRNA(Gln) through the transamidation of misacylated Glu-tRNA(Gln) in organisms which lack glutaminyl-tRNA synthetase. The reaction takes place in the presence of glutamine and ATP through an activated gamma-phospho-Glu-tRNA(Gln). The sequence is that of Glutamyl-tRNA(Gln) amidotransferase subunit A from Pseudomonas fluorescens (strain Pf0-1).